The following is a 324-amino-acid chain: tRNA dimethylallyltransferase (324 aa).

17 to 24 (GPTASGKT) serves as a coordination point for ATP. 19-24 (TASGKT) serves as a coordination point for substrate. Interaction with substrate tRNA regions lie at residues 42–45 (DSAL), 166–170 (QRIQR), 251–256 (RCVGYR), and 284–291 (KRQITWLR).

The protein belongs to the IPP transferase family. As to quaternary structure, monomer. Mg(2+) serves as cofactor.

The enzyme catalyses adenosine(37) in tRNA + dimethylallyl diphosphate = N(6)-dimethylallyladenosine(37) in tRNA + diphosphate. Functionally, catalyzes the transfer of a dimethylallyl group onto the adenine at position 37 in tRNAs that read codons beginning with uridine, leading to the formation of N6-(dimethylallyl)adenosine (i(6)A). In Burkholderia lata (strain ATCC 17760 / DSM 23089 / LMG 22485 / NCIMB 9086 / R18194 / 383), this protein is tRNA dimethylallyltransferase.